Here is a 210-residue protein sequence, read N- to C-terminus: FMN-dependent NADH:quinone oxidoreductase (210 aa).

FMN-binding positions include serine 9 and 15 to 17 (SHS).

It belongs to the azoreductase type 1 family. Homodimer. Requires FMN as cofactor.

The enzyme catalyses 2 a quinone + NADH + H(+) = 2 a 1,4-benzosemiquinone + NAD(+). It catalyses the reaction N,N-dimethyl-1,4-phenylenediamine + anthranilate + 2 NAD(+) = 2-(4-dimethylaminophenyl)diazenylbenzoate + 2 NADH + 2 H(+). Quinone reductase that provides resistance to thiol-specific stress caused by electrophilic quinones. Functionally, also exhibits azoreductase activity. Catalyzes the reductive cleavage of the azo bond in aromatic azo compounds to the corresponding amines. This chain is FMN-dependent NADH:quinone oxidoreductase, found in Mesorhizobium japonicum (strain LMG 29417 / CECT 9101 / MAFF 303099) (Mesorhizobium loti (strain MAFF 303099)).